The primary structure comprises 535 residues: Sodium channel protein Nach (535 aa).

At 1–49 (MGHQEELKPEQVDLKVTPFVGYLRRTWSDFCATSSIHGLKYTRDEDTNK) the chain is on the cytoplasmic side. The helical transmembrane segment at 50–70 (IVHLVWLLISVVMFICAVVMA) threads the bilayer. Over 71–471 (RTFYMDYRSS…LVSNLGSAFS (401 aa)) the chain is Extracellular. Residues N165, N239, and N367 are each glycosylated (N-linked (GlcNAc...) asparagine). The chain crosses the membrane as a helical span at residues 472–492 (LFVGMSMLSVVEIIYYFSVIL). The Cytoplasmic portion of the chain corresponds to 493–535 (RKNYKLECETRSQMLHKKPKFAWPKANDTHSKEQKSVFIIHKS).

This sequence belongs to the amiloride-sensitive sodium channel (TC 1.A.6) family. Embryonic and larval tracheal system; dorsal trunk (but not at fusion with transverse connective), several branches and terminal cells. Also expressed in adult tracheal system; dorsal trunk, but not at the spiracles.

Its subcellular location is the membrane. Part of a complex that plays a role in tracheal liquid clearance. Probable role in sodium transport. The polypeptide is Sodium channel protein Nach (Nach) (Drosophila melanogaster (Fruit fly)).